The primary structure comprises 849 residues: uncharacterized protein (849 aa).

A run of 2 helical transmembrane segments spans residues 587-607 and 620-640; these read VALGEALAAVTLAVGDFLGLF and AGILTLLAAFESIYSFITGDW.

The protein resides in the cell membrane. This is an uncharacterized protein from Methanocaldococcus jannaschii (strain ATCC 43067 / DSM 2661 / JAL-1 / JCM 10045 / NBRC 100440) (Methanococcus jannaschii).